Reading from the N-terminus, the 227-residue chain is GTP:AMP phosphotransferase AK3, mitochondrial (227 aa).

Residues Gly-17, Gly-19, Lys-20, Gly-21, and Thr-22 each contribute to the GTP site. Lys-20 bears the N6-succinyllysine mark. Lys-34 is modified (N6-acetyllysine). Position 37 is a phosphoserine (Ser-37). The interval 37 to 66 is NMP; sequence SSGDLLRDNMLRGTEIGVLAKAFIDQGKLI. AMP is bound by residues Ser-38 and Arg-43. Lys-57 is subject to N6-succinyllysine. Lys-64 contacts AMP. Residues Lys-64 and Lys-80 each carry the N6-acetyllysine; alternate modification. N6-succinyllysine; alternate occurs at positions 64 and 80. Gly-91, Arg-94, and Gln-98 together coordinate AMP. Residues 127–164 are LID; sequence ARWIHPASGRVYNIEFNPPKTVGIDDLTGEPLIQREDD. Residues Arg-128, Tyr-138, Asn-139, Arg-161, and Arg-172 each coordinate GTP. N6-acetyllysine; alternate occurs at positions 174 and 189. Lys-174 and Lys-189 each carry N6-succinyllysine; alternate. Thr-201 serves as a coordination point for GTP. An N6-acetyllysine modification is found at Lys-203.

This sequence belongs to the adenylate kinase family. AK3 subfamily. In terms of assembly, monomer.

It is found in the mitochondrion matrix. The enzyme catalyses a ribonucleoside 5'-triphosphate + AMP = a ribonucleoside 5'-diphosphate + ADP. It catalyses the reaction GTP + AMP = GDP + ADP. It carries out the reaction ITP + AMP = IDP + ADP. Its function is as follows. Mitochondrial adenylate kinase with a specific GTP:AMP phosphotransferase activity. Could also use ITP as phosphate donor. Its physiological function is to recycle GTP into GDP which is necessary for the TCA cycle in the mitochondrial matrix. This is GTP:AMP phosphotransferase AK3, mitochondrial from Pongo abelii (Sumatran orangutan).